The chain runs to 615 residues: UvrABC system protein C (615 aa).

Residues 14–91 (TSPGCYIHKD…IKENKPKYNI (78 aa)) enclose the GIY-YIG domain. A UVR domain is found at 196-231 (NKIIDELKGKMAAAAQTMEFERAAEYRDLIQAIGTL).

It belongs to the UvrC family. Interacts with UvrB in an incision complex.

It is found in the cytoplasm. In terms of biological role, the UvrABC repair system catalyzes the recognition and processing of DNA lesions. UvrC both incises the 5' and 3' sides of the lesion. The N-terminal half is responsible for the 3' incision and the C-terminal half is responsible for the 5' incision. This is UvrABC system protein C from Streptococcus pneumoniae (strain JJA).